The following is a 449-amino-acid chain: Maltose-6'-phosphate glucosidase (449 aa).

Residue 6–72 (FSIVIAGGGS…PDIEFAATTD (67 aa)) participates in NAD(+) binding. Substrate-binding residues include Arg-95 and Asn-149. Mn(2+) is bound at residue Cys-171. Asp-172 functions as the Proton donor in the catalytic mechanism. Mn(2+) is bound at residue His-202. Tyr-265 (proton acceptor) is an active-site residue. Substrate is bound at residue Arg-285.

The protein belongs to the glycosyl hydrolase 4 family. In terms of assembly, homotetramer. Mn(2+) serves as cofactor. Fe(2+) is required as a cofactor. It depends on Co(2+) as a cofactor. The cofactor is Ni(2+). Requires NAD(+) as cofactor.

The enzyme catalyses alpha-maltose 6'-phosphate + H2O = D-glucose 6-phosphate + D-glucose. Cellobiose-6'-phosphate and 6-phospho-beta-D-glucopyranoside are not substrates but competitive inhibitors of GlvA. Its function is as follows. Hydrolyzes maltose-6'-phosphate and trehalose-6'-phosphate. Is involved in the catabolism of alpha-glycosides accumulated via a phosphoenolpyruvate-dependent maltose phosphotransferase system (PEP-PTS). Is also able to significantly catalyze the hydrolysis of both 6-phospho-alpha- and 6-phospho-beta-glucosides containing activated leaving groups such as p-nitrophenol and does so with retention and inversion, respectively, of the substrate anomeric configuration. The sequence is that of Maltose-6'-phosphate glucosidase (glvA) from Bacillus subtilis (strain 168).